A 105-amino-acid chain; its full sequence is MPGVDLNYFIRQANKLTEKIEERKQQLAEESVEAKAGDGRVTVVANGIQEIRSIKIDKEAIDPNDTSMLEDLITAAVNAALASSRQHMQRELAKISGGVKIPGIT.

This sequence belongs to the YbaB/EbfC family. In terms of assembly, homodimer.

Its subcellular location is the cytoplasm. It localises to the nucleoid. Its function is as follows. Binds to DNA and alters its conformation. May be involved in regulation of gene expression, nucleoid organization and DNA protection. The chain is Nucleoid-associated protein MXAN_1931 from Myxococcus xanthus (strain DK1622).